The sequence spans 217 residues: Uracil-DNA glycosylase (217 aa).

The active-site Proton acceptor is Asp62.

It belongs to the uracil-DNA glycosylase (UDG) superfamily. UNG family.

The protein localises to the cytoplasm. The enzyme catalyses Hydrolyzes single-stranded DNA or mismatched double-stranded DNA and polynucleotides, releasing free uracil.. Functionally, excises uracil residues from the DNA which can arise as a result of misincorporation of dUMP residues by DNA polymerase or due to deamination of cytosine. This chain is Uracil-DNA glycosylase, found in Streptococcus pneumoniae (strain P1031).